The following is a 387-amino-acid chain: Formate-dependent phosphoribosylglycinamide formyltransferase (387 aa).

N(1)-(5-phospho-beta-D-ribosyl)glycinamide-binding positions include 12–13 and glutamate 72; that span reads EL. Residues arginine 104, lysine 145, 150–155, 185–188, and glutamate 193 each bind ATP; these read SSGKGQ and EEFI. Residues 109–300 form the ATP-grasp domain; the sequence is DLAAKDLKLL…EFELHLRAIL (192 aa). Residues glutamate 258 and glutamate 270 each contribute to the Mg(2+) site. N(1)-(5-phospho-beta-D-ribosyl)glycinamide is bound by residues aspartate 277, lysine 348, and 355–356; that span reads RR.

Belongs to the PurK/PurT family. In terms of assembly, homodimer.

It carries out the reaction N(1)-(5-phospho-beta-D-ribosyl)glycinamide + formate + ATP = N(2)-formyl-N(1)-(5-phospho-beta-D-ribosyl)glycinamide + ADP + phosphate + H(+). The protein operates within purine metabolism; IMP biosynthesis via de novo pathway; N(2)-formyl-N(1)-(5-phospho-D-ribosyl)glycinamide from N(1)-(5-phospho-D-ribosyl)glycinamide (formate route): step 1/1. Functionally, involved in the de novo purine biosynthesis. Catalyzes the transfer of formate to 5-phospho-ribosyl-glycinamide (GAR), producing 5-phospho-ribosyl-N-formylglycinamide (FGAR). Formate is provided by PurU via hydrolysis of 10-formyl-tetrahydrofolate. The polypeptide is Formate-dependent phosphoribosylglycinamide formyltransferase (Leptospira interrogans serogroup Icterohaemorrhagiae serovar copenhageni (strain Fiocruz L1-130)).